Reading from the N-terminus, the 367-residue chain is Peptide chain release factor 2 (367 aa).

Gln-249 is modified (N5-methylglutamine).

The protein belongs to the prokaryotic/mitochondrial release factor family. Methylated by PrmC. Methylation increases the termination efficiency of RF2.

The protein localises to the cytoplasm. Peptide chain release factor 2 directs the termination of translation in response to the peptide chain termination codons UGA and UAA. The chain is Peptide chain release factor 2 from Thermotoga sp. (strain RQ2).